Here is a 159-residue protein sequence, read N- to C-terminus: Style cell-cycle inhibitor 1 (159 aa).

A disordered region spans residues 1 to 86 (MVSERSSKEK…SDHKLKEGIP (86 aa)). The segment covering 15-50 (ARSEDSSSSDYEEKVKRHRGTEKDDERRSRRSDKKD) has biased composition (basic and acidic residues). Residues 51–63 (KKSHKHHKSSTSK) show a composition bias toward basic residues. The span at 64-85 (KSKDDKPKKKHTESDHKLKEGI) shows a compositional bias: basic and acidic residues.

The protein localises to the nucleus. Functionally, component of the auxin signaling transduction pathway that regulates cell proliferation and differentiation during flowers stigmas and styles development. Involved in the regulation of auxin-related genes. This Arabidopsis thaliana (Mouse-ear cress) protein is Style cell-cycle inhibitor 1.